The chain runs to 400 residues: Nicotinate phosphoribosyltransferase (400 aa).

His220 is modified (phosphohistidine; by autocatalysis).

The protein belongs to the NAPRTase family. In terms of processing, transiently phosphorylated on a His residue during the reaction cycle. Phosphorylation strongly increases the affinity for substrates and increases the rate of nicotinate D-ribonucleotide production. Dephosphorylation regenerates the low-affinity form of the enzyme, leading to product release.

The enzyme catalyses nicotinate + 5-phospho-alpha-D-ribose 1-diphosphate + ATP + H2O = nicotinate beta-D-ribonucleotide + ADP + phosphate + diphosphate. Its pathway is cofactor biosynthesis; NAD(+) biosynthesis; nicotinate D-ribonucleotide from nicotinate: step 1/1. Catalyzes the synthesis of beta-nicotinate D-ribonucleotide from nicotinate and 5-phospho-D-ribose 1-phosphate at the expense of ATP. The protein is Nicotinate phosphoribosyltransferase of Salmonella choleraesuis (strain SC-B67).